Reading from the N-terminus, the 382-residue chain is Alkane 1-monooxygenase 2 (382 aa).

4 consecutive transmembrane segments (helical) span residues 17 to 37, 45 to 65, 88 to 108, and 114 to 134; these read GYLA…FVGV, WAWF…YLVG, VSAI…GHIF, and GLLG…IIAI. The Fe cation site is built by His138, His142, His168, His172, and His173. The helical transmembrane segment at 236-256 threads the bilayer; sequence ALFAATFGLLWGWQGVVFFLG. Residues His312, His315, and His316 each contribute to the Fe cation site.

This sequence belongs to the fatty acid desaturase type 1 family. AlkB subfamily. Fe(3+) is required as a cofactor.

It is found in the cell inner membrane. It catalyses the reaction octane + 2 reduced [rubredoxin] + O2 + 2 H(+) = 2 oxidized [rubredoxin] + octan-1-ol + H2O. It participates in hydrocarbon metabolism; alkane degradation. In terms of biological role, catalyzes the hydroxylation of n-alkanes in the presence of a NADH-rubredoxin reductase and rubredoxin. It preferably hydroxylases C8-C16 hydrocarbons. This is Alkane 1-monooxygenase 2 (alkB2) from Alcanivorax borkumensis (strain ATCC 700651 / DSM 11573 / NCIMB 13689 / SK2).